We begin with the raw amino-acid sequence, 603 residues long: Elongation factor 4 (603 aa).

Residues 7-189 (SHIRNFSIIA…SIVHLVPPPR (183 aa)) form the tr-type G domain. GTP-binding positions include 19–24 (DHGKST) and 136–139 (NKID).

This sequence belongs to the TRAFAC class translation factor GTPase superfamily. Classic translation factor GTPase family. LepA subfamily.

The protein localises to the cell inner membrane. The enzyme catalyses GTP + H2O = GDP + phosphate + H(+). Its function is as follows. Required for accurate and efficient protein synthesis under certain stress conditions. May act as a fidelity factor of the translation reaction, by catalyzing a one-codon backward translocation of tRNAs on improperly translocated ribosomes. Back-translocation proceeds from a post-translocation (POST) complex to a pre-translocation (PRE) complex, thus giving elongation factor G a second chance to translocate the tRNAs correctly. Binds to ribosomes in a GTP-dependent manner. The sequence is that of Elongation factor 4 from Thermosynechococcus vestitus (strain NIES-2133 / IAM M-273 / BP-1).